Here is a 193-residue protein sequence, read N- to C-terminus: Calcium-binding protein E63-1 (193 aa).

EF-hand domains follow at residues 35–70 (VEIK…LGIN), 71–106 (VSDE…IQAL), 127–162 (DVTE…IGEP), and 163–193 (LNEQ…RLLL). Ca(2+)-binding residues include Asp48, Asn50, Asp52, Arg54, and Glu59. Asp140, Asp142, Asn144, Glu151, Asp176, Asp178, Asp180, Arg182, and Glu187 together coordinate Ca(2+).

The polypeptide is Calcium-binding protein E63-1 (Eip63F-1) (Drosophila melanogaster (Fruit fly)).